We begin with the raw amino-acid sequence, 293 residues long: Shikimate dehydrogenase (NADP(+)) (293 aa).

Residues 20 to 22 and T72 contribute to the shikimate site; that span reads SLT. Residue K76 is the Proton acceptor of the active site. The shikimate site is built by N97 and D112. Residues 136 to 140 and I230 contribute to the NADP(+) site; that span reads GAGGA. Residue Y232 participates in shikimate binding. Residue G253 coordinates NADP(+).

The protein belongs to the shikimate dehydrogenase family. Homodimer.

It carries out the reaction shikimate + NADP(+) = 3-dehydroshikimate + NADPH + H(+). Its pathway is metabolic intermediate biosynthesis; chorismate biosynthesis; chorismate from D-erythrose 4-phosphate and phosphoenolpyruvate: step 4/7. In terms of biological role, involved in the biosynthesis of the chorismate, which leads to the biosynthesis of aromatic amino acids. Catalyzes the reversible NADPH linked reduction of 3-dehydroshikimate (DHSA) to yield shikimate (SA). In Pseudarthrobacter chlorophenolicus (strain ATCC 700700 / DSM 12829 / CIP 107037 / JCM 12360 / KCTC 9906 / NCIMB 13794 / A6) (Arthrobacter chlorophenolicus), this protein is Shikimate dehydrogenase (NADP(+)).